An 87-amino-acid chain; its full sequence is Apoptosis inducing factor BLCAP B (87 aa).

2 helical membrane passes run Pro-19–Glu-39 and Cys-43–Gly-63.

This sequence belongs to the BLCAP family.

It is found in the cytoplasm. It localises to the nucleus. The protein resides in the membrane. Acts as a tumor suppressor; induces growth arrest at G(1)/S checkpoint and apoptosis via RB1-dependent and p53/TP53- and NF-kappa-B-independent mechanisms. Modulates expression of genes involved in the regulation of proliferation, cell cycle and apoptosis. The protein is Apoptosis inducing factor BLCAP B (blcap-b) of Xenopus laevis (African clawed frog).